The chain runs to 273 residues: 2-dehydro-3-deoxyphosphooctonate aldolase (273 aa).

This sequence belongs to the KdsA family.

The protein localises to the cytoplasm. The enzyme catalyses D-arabinose 5-phosphate + phosphoenolpyruvate + H2O = 3-deoxy-alpha-D-manno-2-octulosonate-8-phosphate + phosphate. Its pathway is carbohydrate biosynthesis; 3-deoxy-D-manno-octulosonate biosynthesis; 3-deoxy-D-manno-octulosonate from D-ribulose 5-phosphate: step 2/3. The protein operates within bacterial outer membrane biogenesis; lipopolysaccharide biosynthesis. In Nitratidesulfovibrio vulgaris (strain ATCC 29579 / DSM 644 / CCUG 34227 / NCIMB 8303 / VKM B-1760 / Hildenborough) (Desulfovibrio vulgaris), this protein is 2-dehydro-3-deoxyphosphooctonate aldolase.